Consider the following 687-residue polypeptide: Polyphosphate kinase (687 aa).

Asparagine 45 is an ATP binding site. Residues arginine 375 and arginine 405 each coordinate Mg(2+). Catalysis depends on histidine 435, which acts as the Phosphohistidine intermediate. Tyrosine 472, arginine 568, and histidine 596 together coordinate ATP.

It belongs to the polyphosphate kinase 1 (PPK1) family. Mg(2+) serves as cofactor. In terms of processing, an intermediate of this reaction is the autophosphorylated ppk in which a phosphate is covalently linked to a histidine residue through a N-P bond.

It catalyses the reaction [phosphate](n) + ATP = [phosphate](n+1) + ADP. Its function is as follows. Catalyzes the reversible transfer of the terminal phosphate of ATP to form a long-chain polyphosphate (polyP). The polypeptide is Polyphosphate kinase (Paraburkholderia phytofirmans (strain DSM 17436 / LMG 22146 / PsJN) (Burkholderia phytofirmans)).